Consider the following 215-residue polypeptide: Octanoyltransferase (215 aa).

Positions 35–210 constitute a BPL/LPL catalytic domain; that stretch reads PDTPDQLWVV…HCLEAIVEYG (176 aa). Substrate is bound by residues 74-81, 141-143, and 154-156; these read RGGQVTYH, SVG, and GLA. Catalysis depends on cysteine 172, which acts as the Acyl-thioester intermediate.

Belongs to the LipB family.

The protein localises to the cytoplasm. The enzyme catalyses octanoyl-[ACP] + L-lysyl-[protein] = N(6)-octanoyl-L-lysyl-[protein] + holo-[ACP] + H(+). It functions in the pathway protein modification; protein lipoylation via endogenous pathway; protein N(6)-(lipoyl)lysine from octanoyl-[acyl-carrier-protein]: step 1/2. Catalyzes the transfer of endogenously produced octanoic acid from octanoyl-acyl-carrier-protein onto the lipoyl domains of lipoate-dependent enzymes. Lipoyl-ACP can also act as a substrate although octanoyl-ACP is likely to be the physiological substrate. This chain is Octanoyltransferase, found in Alkalilimnicola ehrlichii (strain ATCC BAA-1101 / DSM 17681 / MLHE-1).